A 556-amino-acid chain; its full sequence is Interleukin-1 receptor-like 1 (556 aa).

A signal peptide spans 1–18 (MGFWILAILTILMYSTAA). Ig-like C2-type domains follow at residues 19–103 (KFSK…ANVT) and 114–197 (PDYL…VTAT). Over 19–328 (KFSKQSWGLE…SRKNPIDHHS (310 aa)) the chain is Extracellular. A disulfide bond links C36 and C87. 5 N-linked (GlcNAc...) asparagine glycosylation sites follow: N54, N95, N101, N140, and N191. Disulfide bonds link C111-C151 and C133-C181. Residues 198–211 (RSFTVKDEQGFSLF) are flexible linker. The 108-residue stretch at 212-319 (PVIGAPAQNE…GLRRHTVRLS (108 aa)) folds into the Ig-like C2-type 3 domain. N232, N254, and N273 each carry an N-linked (GlcNAc...) asparagine glycan. Cystine bridges form between C235-C303 and C238-C282. K321 is covalently cross-linked (Glycyl lysine isopeptide (Lys-Gly) (interchain with G-Cter in ubiquitin)). The chain crosses the membrane as a helical span at residues 329-349 (IYCIIAVCSVFLMLINVLVII). The Cytoplasmic segment spans residues 350-556 (LKMFWIEATL…SLTPLAAQKQ (207 aa)). One can recognise a TIR domain in the interval 375–535 (KLYDAYVVYP…KFWKHVRYQM (161 aa)). E461 is an active-site residue.

It belongs to the interleukin-1 receptor family. Interacts with MYD88, IRAK1, IRAK4, and TRAF6. Bound to its ligand IL-33, interacts with IL1RAP to form the minimal interleukin-33 signaling complex with a 1:1:1 stoichiometry. Interacts with KIT (bound to KITLG/SCF). A mast cell-specific KITLG/SCF-induced interleukin-33 signaling complex contains IL1RL1, IL1RAP, KIT and MYD88. Interacts with TMED1. In terms of processing, ubiquitinated at Lys-321 in a FBXL19-mediated manner; leading to proteasomal degradation. Ubiquitination by TRAF6 via 'Lys-27'-linked polyubiquitination and deubiquitination by USP38 serves as a critical regulatory mechanism for fine-tuning IL1RL1-mediated inflammatory response. As to expression, highly expressed in kidney, lung, placenta, stomach, skeletal muscle, colon and small intestine. Isoform A is prevalently expressed in the lung, testis, placenta, stomach and colon. Isoform B is more abundant in the brain, kidney and the liver. Isoform C is not detected in brain, heart, liver, kidney and skeletal muscle. Expressed on T-cells in fibrotic liver; at protein level. Overexpressed in fibrotic and cirrhotic liver.

It is found in the cell membrane. It localises to the secreted. The catalysed reaction is NAD(+) + H2O = ADP-D-ribose + nicotinamide + H(+). In terms of biological role, receptor for interleukin-33 (IL-33) which plays crucial roles in innate and adaptive immunity, contributing to tissue homeostasis and responses to environmental stresses together with coreceptor IL1RAP. Its stimulation recruits MYD88, IRAK1, IRAK4, and TRAF6, followed by phosphorylation of MAPK3/ERK1 and/or MAPK1/ERK2, MAPK14, and MAPK8. Possibly involved in helper T-cell function. Upon tissue injury, induces UCP2-dependent mitochondrial rewiring that attenuates the generation of reactive oxygen species and preserves the integrity of Krebs cycle required for persistent production of itaconate and subsequent GATA3-dependent differentiation of inflammation-resolving alternatively activated macrophages. Its function is as follows. Inhibits IL-33 signaling. The sequence is that of Interleukin-1 receptor-like 1 (IL1RL1) from Homo sapiens (Human).